Reading from the N-terminus, the 286-residue chain is ATP synthase gamma chain (286 aa).

It belongs to the ATPase gamma chain family. In terms of assembly, F-type ATPases have 2 components, CF(1) - the catalytic core - and CF(0) - the membrane proton channel. CF(1) has five subunits: alpha(3), beta(3), gamma(1), delta(1), epsilon(1). CF(0) has three main subunits: a, b and c.

The protein resides in the cell inner membrane. Functionally, produces ATP from ADP in the presence of a proton gradient across the membrane. The gamma chain is believed to be important in regulating ATPase activity and the flow of protons through the CF(0) complex. This Shewanella piezotolerans (strain WP3 / JCM 13877) protein is ATP synthase gamma chain.